The sequence spans 174 residues: MLPRLSFNNVSWTLLYYLFIFQVRGEDSQKAVPSTRTSCPMGSKAYRSYCYTLVTTLKSWFQADLACQKRPSGHLVSILSGGEASFVSSLVTGRVNNNQDIWIWLHDPTMGQQPNGGGWEWSNSDVLNYLNWDGDPSSTVNRGNCGSLTATSEFLKWGDHHCDVELPFVCKFKQ.

The first 25 residues, 1-25 (MLPRLSFNNVSWTLLYYLFIFQVRG), serve as a signal peptide directing secretion. A propeptide spanning residues 26-36 (EDSQKAVPSTR) is cleaved from the precursor. 3 disulfides stabilise this stretch: Cys39–Cys50, Cys67–Cys170, and Cys145–Cys162. Residues 46-171 (YRSYCYTLVT…CDVELPFVCK (126 aa)) enclose the C-type lectin domain. Residues 102-117 (WIWLHDPTMGQQPNGG) form a sufficient to activate EXTL3 region. His106 and Glu120 together coordinate Zn(2+).

In terms of assembly, forms a hexameric membrane-permeabilizing oligomeric pore on membrane phospholipids. The hexamer is formed by three dimers related by helical symmetry. Forms filaments, filamentation traps pore complexes and limits damage to host cells. Interacts with EXTL3. In terms of processing, proteolytic processing by trypsin removes an inhibitory N-terminal propeptide and is essential for peptidoglycan binding and antibacterial activity. Low expression found in healthy pancreas.

It localises to the secreted. Functionally, bactericidal C-type lectin. The lack of the EPN motif may explain its inability to bind peptidoglycan. Acts as a hormone in response to different stimuli like anti-inflammatory signals, such as IL17A, or gut microbiome. Secreted by different cell types to activate its receptor EXTL3 and induce cell specific signaling pathways. Induced by IL17A in keratinocytes, regulates keratinocyte proliferation and differentiation after skin injury via activation of EXTL3-PI3K-AKT signaling pathway. In parallel, inhibits skin inflammation through the inhibition of inflammatory cytokines such as IL6 and TNF. In pancreas, is able to permealize beta-cells membrane and stimulate their proliferation. In Rattus norvegicus (Rat), this protein is Regenerating islet-derived protein 3-alpha (Reg3a).